The sequence spans 471 residues: ATP synthase subunit beta (471 aa).

157 to 164 serves as a coordination point for ATP; the sequence is GGAGVGKT.

This sequence belongs to the ATPase alpha/beta chains family. In terms of assembly, F-type ATPases have 2 components, CF(1) - the catalytic core - and CF(0) - the membrane proton channel. CF(1) has five subunits: alpha(3), beta(3), gamma(1), delta(1), epsilon(1). CF(0) has three main subunits: a(1), b(2) and c(9-12). The alpha and beta chains form an alternating ring which encloses part of the gamma chain. CF(1) is attached to CF(0) by a central stalk formed by the gamma and epsilon chains, while a peripheral stalk is formed by the delta and b chains.

The protein localises to the cell inner membrane. It carries out the reaction ATP + H2O + 4 H(+)(in) = ADP + phosphate + 5 H(+)(out). Functionally, produces ATP from ADP in the presence of a proton gradient across the membrane. The catalytic sites are hosted primarily by the beta subunits. The protein is ATP synthase subunit beta of Trichlorobacter lovleyi (strain ATCC BAA-1151 / DSM 17278 / SZ) (Geobacter lovleyi).